We begin with the raw amino-acid sequence, 408 residues long: UDP-N-acetylglucosamine--dolichyl-phosphate N-acetylglucosaminephosphotransferase (408 aa).

Residues 1-10 (MWAFSELPMP) lie on the Lumenal side of the membrane. Residues 11–38 (LLINLIVSLLGFVATVTLIPAFRGHFIA) traverse the membrane as a helical segment. Over 39 to 58 (ARLCGQDLNKTSRQQIPESQ) the chain is Cytoplasmic. UDP-N-acetyl-alpha-D-glucosamine is bound by residues 44 to 46 (QDL) and E56. L46 is a binding site for tunicamycin A1. A helical membrane pass occupies residues 59–78 (GVISGAVFLIILFCFIPFPF). The Lumenal segment spans residues 79–91 (LNCFVKEQCKAFP). The helical transmembrane segment at 92 to 118 (HHEFVALIGALLAICCMIFLGFADDVL) threads the bilayer. A tunicamycin A1-binding site is contributed by N119. Residues 119–121 (NLR) lie on the Cytoplasmic side of the membrane. The helical transmembrane segment at 122–143 (WRHKLLLPTAASLPLLMVYFTN) threads the bilayer. K125 serves as a coordination point for dolichyl phosphate. Over 144-166 (FGNTTIVVPKPFRPILGLHLDLG) the chain is Lumenal. N-linked (GlcNAc...) asparagine glycosylation is present at N146. Residues 167–186 (ILYYVYMGLLAVFCTNAINI) traverse the membrane as a helical segment. Dolichyl phosphate is bound at residue 178–186 (VFCTNAINI). N185 contributes to the tunicamycin A1 binding site. Residue N185 coordinates Mg(2+). The Cytoplasmic portion of the chain corresponds to 187 to 192 (LAGING). UDP-N-acetyl-alpha-D-glucosamine is bound at residue N191. Residues 193-213 (LEAGQSLVISASIIVFNLVEL) traverse the membrane as a helical segment. Residues 214–218 (EGDCR) are Lumenal-facing. Residues 219–242 (DDHVFSLYFMIPFFFTTLGLLYHN) form a helical membrane-spanning segment. Topologically, residues 243–250 (WYPSRVFV) are cytoplasmic. Residues 251–269 (GDTFCYFAGMTFAVVGILG) traverse the membrane as a helical segment. D252 lines the tunicamycin A1 pocket. D252 contributes to the Mg(2+) binding site. The Lumenal segment spans residues 270–271 (HF). The helical transmembrane segment at 272–293 (SKTMLLFFMPQVFNFLYSLPQL) threads the bilayer. At 294 to 375 (LHIIPCPRHR…LLLKVLGPIH (82 aa)) the chain is on the cytoplasmic side. UDP-N-acetyl-alpha-D-glucosamine is bound at residue 301-303 (RHR). Residue R303 participates in tunicamycin A1 binding. A helical membrane pass occupies residues 376 to 400 (ERNLTLLLLLLQILGSAITFSIRYQ). At 401-408 (LVRLFYDV) the chain is on the lumenal side.

This sequence belongs to the glycosyltransferase 4 family. In terms of assembly, homodimer. Mg(2+) is required as a cofactor.

The protein resides in the endoplasmic reticulum membrane. The catalysed reaction is a di-trans,poly-cis-dolichyl phosphate + UDP-N-acetyl-alpha-D-glucosamine = an N-acetyl-alpha-D-glucosaminyl-diphospho-di-trans,poly-cis-dolichol + UMP. It participates in protein modification; protein glycosylation. Its activity is regulated as follows. Inhibited by natural nucleoside antibiotic tunicamycin, which acts as a structural analog and competitor of UDP-GlcNAc. Activated by mannosylphosphoryldolichol and phospholipids such as phosphatidylglycerol and phosphatidylcholine. In terms of biological role, UDP-N-acetylglucosamine--dolichyl-phosphate N-acetylglucosaminephosphotransferase that operates in the biosynthetic pathway of dolichol-linked oligosaccharides, the glycan precursors employed in protein asparagine (N)-glycosylation. The assembly of dolichol-linked oligosaccharides begins on the cytosolic side of the endoplasmic reticulum membrane and finishes in its lumen. The sequential addition of sugars to dolichol pyrophosphate produces dolichol-linked oligosaccharides containing fourteen sugars, including two GlcNAcs, nine mannoses and three glucoses. Once assembled, the oligosaccharide is transferred from the lipid to nascent proteins by oligosaccharyltransferases. Catalyzes the initial step of dolichol-linked oligosaccharide biosynthesis, transfering GlcNAc-1-P from cytosolic UDP-GlcNAc onto the carrier lipid dolichyl phosphate (P-dolichol), yielding GlcNAc-P-P-dolichol embedded in the cytoplasmic leaflet of the endoplasmic reticulum membrane. This Homo sapiens (Human) protein is UDP-N-acetylglucosamine--dolichyl-phosphate N-acetylglucosaminephosphotransferase.